We begin with the raw amino-acid sequence, 1026 residues long: Multidrug resistance protein MdtC (1026 aa).

A run of 10 helical transmembrane segments spans residues 12-34 (VATL…LLPV), 336-353 (QSLI…FLFL), 360-382 (AIPA…LCGF), 431-450 (VGFT…LPLL), 463-485 (FAVT…TPML), 525-547 (HARW…YISI), 853-875 (LLLI…ESYV), 895-917 (LEWF…IGIV), 948-970 (LLRF…PLVL), and 985-1007 (TIVG…VYLF).

This sequence belongs to the resistance-nodulation-cell division (RND) (TC 2.A.6) family. MdtC subfamily. Part of a tripartite efflux system composed of MdtA, MdtB and MdtC. MdtC forms a heteromultimer with MdtB.

Its subcellular location is the cell inner membrane. The chain is Multidrug resistance protein MdtC from Pectobacterium atrosepticum (strain SCRI 1043 / ATCC BAA-672) (Erwinia carotovora subsp. atroseptica).